Consider the following 318-residue polypeptide: NADH-quinone oxidoreductase subunit H 2 (318 aa).

The next 9 helical transmembrane spans lie at 4–24, 77–97, 106–126, 146–166, 179–199, 214–234, 238–258, 262–282, and 293–313; these read LLIALFSLILLLALLGAAGVF, LAPALAAFPMLAGFGVVAFAP, VGVLFVMGMLALTVWALVLGA, LAYESFLGLSLMGCVLLAGSF, LWFILLQPLGAALFFLAGLAA, LVAGFMTEYSGMSFALFFLGE, ILLVAALFTTLFLGGWAGPIL, VWFGLKVAAISVVFVWLRAAL, and FAWKVALPLALLNLLVTAWIA.

The protein belongs to the complex I subunit 1 family. NDH-1 is composed of 14 different subunits. Subunits NuoA, H, J, K, L, M, N constitute the membrane sector of the complex.

It localises to the cell inner membrane. The enzyme catalyses a quinone + NADH + 5 H(+)(in) = a quinol + NAD(+) + 4 H(+)(out). In terms of biological role, NDH-1 shuttles electrons from NADH, via FMN and iron-sulfur (Fe-S) centers, to quinones in the respiratory chain. The immediate electron acceptor for the enzyme in this species is believed to be ubiquinone. Couples the redox reaction to proton translocation (for every two electrons transferred, four hydrogen ions are translocated across the cytoplasmic membrane), and thus conserves the redox energy in a proton gradient. This subunit may bind ubiquinone. The polypeptide is NADH-quinone oxidoreductase subunit H 2 (Cereibacter sphaeroides (strain ATCC 17029 / ATH 2.4.9) (Rhodobacter sphaeroides)).